We begin with the raw amino-acid sequence, 677 residues long: Serine/threonine-protein kinase YPK2/YKR2 (677 aa).

A compositionally biased stretch (basic residues) spans Met-1–Gly-12. The interval Met-1–Gly-115 is disordered. Residues Lys-41 to His-56 are compositionally biased toward basic and acidic residues. Composition is skewed to polar residues over residues Ile-61–Ser-93 and Ser-101–Gly-115. Thr-63 and Thr-66 each carry phosphothreonine. Residue Ser-72 is modified to Phosphoserine. Residues Phe-344 to Phe-599 form the Protein kinase domain. ATP is bound by residues Ile-350–Val-358 and Lys-373. The active-site Proton acceptor is the Asp-467. Thr-499 carries the phosphothreonine modification. At Thr-501 the chain carries Phosphothreonine; by PKH2. The 71-residue stretch at Lys-600 to Pro-670 folds into the AGC-kinase C-terminal domain. The residue at position 641 (Ser-641) is a Phosphoserine; by TOR2. Ser-650 carries the post-translational modification Phosphoserine. The residue at position 659 (Thr-659) is a Phosphothreonine; by TOR2. At Ser-669 the chain carries Phosphoserine.

It belongs to the protein kinase superfamily. AGC Ser/Thr protein kinase family. RAC subfamily. Autophosphorylated. Phosphorylated by PKH2 and TOR2.

The protein localises to the cytoplasm. It catalyses the reaction L-seryl-[protein] + ATP = O-phospho-L-seryl-[protein] + ADP + H(+). The enzyme catalyses L-threonyl-[protein] + ATP = O-phospho-L-threonyl-[protein] + ADP + H(+). With respect to regulation, activated by phytosphingosine (PHS), a sphingoid long chain base. Activated by PKH2 phosphorylation. Kinase activity is regulated by TOR2 via direct phosphorylation of Ser-641 and Thr-659. In terms of biological role, plays an essential role in the proliferation of yeast cells. Involved in a signaling pathway, required for optimal cell wall integrity, that acts in parallel with the PKC1-SLT2-dependent pathway. A substrate of TOR complex 2 (TORC2) and required for TORC2 to regulate spatial aspects of cell growth. Phosphorylation of residue Thr-501 is indispensable for function. May act as a downstream kinase in the sphingolipid-mediated signaling pathway. This is Serine/threonine-protein kinase YPK2/YKR2 (YPK2) from Saccharomyces cerevisiae (strain ATCC 204508 / S288c) (Baker's yeast).